Consider the following 170-residue polypeptide: Non-specific lipid transfer protein GPI-anchored 5 (170 aa).

Residues 1-24 (MKMEMGLVFLTVFMAVMSSTMVSA) form the signal peptide. Disulfide bonds link Cys28-Cys69, Cys38-Cys53, Cys54-Cys95, and Cys67-Cys105. 4 N-linked (GlcNAc...) asparagine glycosylation sites follow: Asn45, Asn84, Asn124, and Asn130. The disordered stretch occupies residues 105-148 (CNTGGGGGGSTSDSPAESPNSSGPGNGSKTVPVGEGDGPPSSDG). Ser146 carries the GPI-anchor amidated serine lipid modification. Positions 147–170 (DGSSIKFSFPLIAFFSAVSYMAIF) are cleaved as a propeptide — removed in mature form.

It belongs to the plant LTP family. As to expression, expressed in seedlings, preferentially in the endodermis of hypocotyls and roots, as well as in anthers, sepals and flower tori.

Its subcellular location is the cell membrane. Its function is as follows. Lipid transfer protein involved in seed and ovule maturation and development, probably by regulating the fatty acids homeostasis during suberin and sporopollenin biosynthesis or deposition. Contributes to pre-invasive defense against some non-host powdery mildew pathogens by preventing the penetration of the epidermal cell wall by the fungal agents (e.g. Blumeria graminis f. sp. hordei (Bgh)). This is Non-specific lipid transfer protein GPI-anchored 5 from Arabidopsis thaliana (Mouse-ear cress).